The primary structure comprises 682 residues: MPLLSQMQDQSGTTFAQLEALRQKLREYEYYYHVLDNPLVPDAEYDRLMNELKNLEWQHPEWITADSPTQRVGAKPLDGFAQVTHEIPMLSLDNAFSDEELDGFLRRMESYITEDPHTLAFCCEPKLDGLAVSILYVDGVLSQAATRGDGTTGEDITSNIRTVRNIPLKLNMDNPPARLEVRGEVFMPQKGFETLNERALEKGEKTFANPRNAAAGSLRQLDPKITRQRPLVLNAYGIGVYESDDELPATHFERLQWLKSIGIPVNNEIRLATGREQLLAFYADIQAKRPTLGYDIDGTVLKVNDIGLQEQLGFISRSPRWAIAYKFPAQEEMTVLNDVEFQVGRTGAITPVAKLEPVFVAGVTVSNATLHNGDEIERLGIVIGDTVIIRRAGDVIPQIVGVVMERRPENAKKIEFPTACPVCESAVVRVEGEAVARCTGGLFCGAQRKEALKHFVSRKAMDIDGVGEKLIEQLMERELVHTPADLFKLEHTTLMRLERMGGKSAQNALNSIEKAKNTTLARFLFALGIRDVGEATAQNLANHFHNLDAIRAATFEQLQEVQDVGEVVANRIVRFWQEPHNVTVVEDLISQGIHWQDVVQVEIADNPLKGKSVVLTGTLTQLTRDQAKALLQSFGCKVSGSVSSKTDYLIAGEKAGSKLAKAQELGVKVLTEQEFIALTGEN.

Residues 42–46 (DAEYD), 91–92 (SL), and E124 contribute to the NAD(+) site. The active-site N6-AMP-lysine intermediate is K126. The NAD(+) site is built by R147, E184, K302, and K326. The Zn(2+) site is built by C420, C423, C438, and C444. Residues 603–682 (IADNPLKGKS…QEFIALTGEN (80 aa)) form the BRCT domain.

The protein belongs to the NAD-dependent DNA ligase family. LigA subfamily. Mg(2+) serves as cofactor. The cofactor is Mn(2+).

The enzyme catalyses NAD(+) + (deoxyribonucleotide)n-3'-hydroxyl + 5'-phospho-(deoxyribonucleotide)m = (deoxyribonucleotide)n+m + AMP + beta-nicotinamide D-nucleotide.. In terms of biological role, DNA ligase that catalyzes the formation of phosphodiester linkages between 5'-phosphoryl and 3'-hydroxyl groups in double-stranded DNA using NAD as a coenzyme and as the energy source for the reaction. It is essential for DNA replication and repair of damaged DNA. The chain is DNA ligase from Actinobacillus pleuropneumoniae serotype 3 (strain JL03).